Reading from the N-terminus, the 595-residue chain is Elongation factor 4 (595 aa).

Residues 1–183 (MNVRNFSIIA…AIVERIPPPP (183 aa)) enclose the tr-type G domain. GTP contacts are provided by residues 13 to 18 (DHGKST) and 130 to 133 (NKID).

It belongs to the TRAFAC class translation factor GTPase superfamily. Classic translation factor GTPase family. LepA subfamily.

The protein localises to the cell membrane. The enzyme catalyses GTP + H2O = GDP + phosphate + H(+). In terms of biological role, required for accurate and efficient protein synthesis under certain stress conditions. May act as a fidelity factor of the translation reaction, by catalyzing a one-codon backward translocation of tRNAs on improperly translocated ribosomes. Back-translocation proceeds from a post-translocation (POST) complex to a pre-translocation (PRE) complex, thus giving elongation factor G a second chance to translocate the tRNAs correctly. Binds to ribosomes in a GTP-dependent manner. This chain is Elongation factor 4, found in Deinococcus geothermalis (strain DSM 11300 / CIP 105573 / AG-3a).